The chain runs to 295 residues: MTLEEQFLSYLKNERSYSPKTVLAYQKDLAAAKKFWQENGGFPGWDQISRRDLEIYLLATGQKLASSTLSRKLSSLKSFYRFLTRRGLVKADPTVAIQLRRGKKKLPEFFYQDEVGQVIRSLNDGKPLTVRNRAIVALFYATGMRLSELTDLKIKQLDLENGMILVHGKGNKDRYVFFDQESKKYLEEYLQAARPSLLKNEPDTGAVFLNKLGRPISSRGIAKAVQQIFQKAGLTAGAHPHELRHSFATAMLNNGADLRSVQELLGHEDLSTTQIYTHVSMQHLTVEYRQHFPRK.

One can recognise a Core-binding (CB) domain in the interval 1–84 (MTLEEQFLSY…SLKSFYRFLT (84 aa)). The Tyr recombinase domain maps to 105 to 289 (KLPEFFYQDE…SMQHLTVEYR (185 aa)). Residues arginine 145, lysine 169, histidine 241, arginine 244, and histidine 267 contribute to the active site. Tyrosine 276 functions as the O-(3'-phospho-DNA)-tyrosine intermediate in the catalytic mechanism.

This sequence belongs to the 'phage' integrase family. XerC subfamily. Forms a cyclic heterotetrameric complex composed of two molecules of XerC and two molecules of XerD.

It localises to the cytoplasm. Site-specific tyrosine recombinase, which acts by catalyzing the cutting and rejoining of the recombining DNA molecules. The XerC-XerD complex is essential to convert dimers of the bacterial chromosome into monomers to permit their segregation at cell division. It also contributes to the segregational stability of plasmids. In Lactobacillus delbrueckii subsp. bulgaricus (strain ATCC 11842 / DSM 20081 / BCRC 10696 / JCM 1002 / NBRC 13953 / NCIMB 11778 / NCTC 12712 / WDCM 00102 / Lb 14), this protein is Tyrosine recombinase XerC.